A 233-amino-acid polypeptide reads, in one-letter code: Biosynthetic peptidoglycan transglycosylase (233 aa).

The chain crosses the membrane as a helical span at residues 8–28 (LIALPVGIFIFFNAYVYGNII).

Belongs to the glycosyltransferase 51 family.

The protein localises to the cell inner membrane. It catalyses the reaction [GlcNAc-(1-&gt;4)-Mur2Ac(oyl-L-Ala-gamma-D-Glu-L-Lys-D-Ala-D-Ala)](n)-di-trans,octa-cis-undecaprenyl diphosphate + beta-D-GlcNAc-(1-&gt;4)-Mur2Ac(oyl-L-Ala-gamma-D-Glu-L-Lys-D-Ala-D-Ala)-di-trans,octa-cis-undecaprenyl diphosphate = [GlcNAc-(1-&gt;4)-Mur2Ac(oyl-L-Ala-gamma-D-Glu-L-Lys-D-Ala-D-Ala)](n+1)-di-trans,octa-cis-undecaprenyl diphosphate + di-trans,octa-cis-undecaprenyl diphosphate + H(+). The protein operates within cell wall biogenesis; peptidoglycan biosynthesis. Its function is as follows. Peptidoglycan polymerase that catalyzes glycan chain elongation from lipid-linked precursors. This Neisseria gonorrhoeae (strain ATCC 700825 / FA 1090) protein is Biosynthetic peptidoglycan transglycosylase.